Here is a 247-residue protein sequence, read N- to C-terminus: Oil body-associated protein 2B (247 aa).

Residues 1–28 form a disordered region; that stretch reads MASSDKVPVACPASSGDGKEPMGNPTKT.

It belongs to the OBAP family.

The sequence is that of Oil body-associated protein 2B from Arabidopsis thaliana (Mouse-ear cress).